We begin with the raw amino-acid sequence, 762 residues long: Dolichyl-phosphate-mannose--protein mannosyltransferase 4 (762 aa).

The span at 1 to 10 (MSVPKKRNHG) shows a compositional bias: basic residues. Positions 1 to 24 (MSVPKKRNHGKLPPSTKDVDDPSL) are disordered. Topologically, residues 1–53 (MSVPKKRNHGKLPPSTKDVDDPSLKYTKAAPKCEQVAEHWLLQPLPEPESRYS) are lumenal. Residues 54 to 74 (FWVTIVTLLAFAARFYKIWYP) traverse the membrane as a helical segment. Over 75–136 (KEVVFDEVHF…IGYSYETHPA (62 aa)) the chain is Cytoplasmic. A helical transmembrane segment spans residues 137-157 (PYIAYRSFNAILGTLTVPIMF). Over 158–166 (NTLKELNFR) the chain is Lumenal. The helical transmembrane segment at 167–187 (AITCAFASLLVAIDTAHVTET) threads the bilayer. Residues 188-189 (RL) are Cytoplasmic-facing. A helical transmembrane segment spans residues 190-210 (ILLDAILIISIAATMYCYVRF). Residues 211-217 (YKCQLRQ) lie on the Lumenal side of the membrane. A helical transmembrane segment spans residues 218–238 (PFTWSWYIWLHATGLSLSFVI). Over 239–242 (STKY) the chain is Cytoplasmic. A helical membrane pass occupies residues 243–263 (VGVMTYSAIGFAAVVNLWQLL). Residues 264 to 283 (DIKAGLSLRQFMRHFSKRLN) are Lumenal-facing. A helical transmembrane segment spans residues 284-304 (GLVLIPFVIYLFWFWVHFTVL). Residues 305–593 (NTSGPGDAFM…NGDEKKQIYF (289 aa)) are Cytoplasmic-facing. 3 consecutive MIR domains span residues 331 to 391 (SKTV…VLPP), 399 to 458 (GQAV…FQPL), and 464 to 521 (GHVL…VDEI). A helical membrane pass occupies residues 594-614 (IGNIIGWWFQVISLAVFVGII). Topologically, residues 615–635 (VADLITRHRGYYALNKMTREK) are lumenal. The helical transmembrane segment at 636 to 656 (LYGPLMFFFVSWCCHYFPFFL) threads the bilayer. Over 657 to 716 (MARQKFLHHYLPAHLIACLFSGALWEVIFSDCKSLDLEKDEDISGASYERNPKVYVKPYT) the chain is Cytoplasmic. The chain crosses the membrane as a helical span at residues 717–737 (VFLVCVSCAVAWFFVYFSPLV). Over 738-762 (YGDVSLSPSEVVSREWFDIELNFSK) the chain is Lumenal. N-linked (GlcNAc...) asparagine glycosylation occurs at Asn759.

It belongs to the glycosyltransferase 39 family. As to quaternary structure, forms a functional homodimer and may form a heterodimer with PMT6. Interacts with RCR1.

The protein resides in the endoplasmic reticulum membrane. The catalysed reaction is a di-trans,poly-cis-dolichyl beta-D-mannosyl phosphate + L-seryl-[protein] = 3-O-(alpha-D-mannosyl)-L-seryl-[protein] + a di-trans,poly-cis-dolichyl phosphate + H(+). The enzyme catalyses a di-trans,poly-cis-dolichyl beta-D-mannosyl phosphate + L-threonyl-[protein] = 3-O-(alpha-D-mannosyl)-L-threonyl-[protein] + a di-trans,poly-cis-dolichyl phosphate + H(+). The protein operates within protein modification; protein glycosylation. Functionally, protein O-mannosyltransferase involved in O-glycosylation which is essential for cell wall rigidity. Forms a homodimeric complex to transfer mannose from Dol-P-mannose to Ser or Thr residues on proteins. Specifically acts on secretory proteins with an ER-luminally oriented Ser/Thr-rich region flanked by a membrane anchor such as FUS1, AXL2, GAS1, KEX2, MID2, WSC1, WSC2, OPY2, PRM5, RAX2, or YNL176. The chain is Dolichyl-phosphate-mannose--protein mannosyltransferase 4 from Saccharomyces cerevisiae (strain ATCC 204508 / S288c) (Baker's yeast).